Here is a 300-residue protein sequence, read N- to C-terminus: Glycine--tRNA ligase alpha subunit (300 aa).

It belongs to the class-II aminoacyl-tRNA synthetase family. Tetramer of two alpha and two beta subunits.

Its subcellular location is the cytoplasm. It catalyses the reaction tRNA(Gly) + glycine + ATP = glycyl-tRNA(Gly) + AMP + diphosphate. This chain is Glycine--tRNA ligase alpha subunit (glyQ), found in Buchnera aphidicola subsp. Baizongia pistaciae (strain Bp).